We begin with the raw amino-acid sequence, 327 residues long: GTPase Obg (327 aa).

Residues 1-159 (MQFIDQANII…WEVQLELKLL (159 aa)) enclose the Obg domain. Residues 160-327 (AEVGIIGLPN…SLLSEVWKRI (168 aa)) form the OBG-type G domain. Residues 166 to 173 (GLPNAGKS), 191 to 195 (FTTLI), 213 to 216 (DIPG), 280 to 283 (NKIE), and 309 to 311 (SSS) each bind ATP. Residues serine 173 and threonine 193 each coordinate Mg(2+).

The protein belongs to the TRAFAC class OBG-HflX-like GTPase superfamily. OBG GTPase family. Monomer. It depends on Mg(2+) as a cofactor.

It is found in the cytoplasm. In terms of biological role, an essential GTPase which binds GTP, GDP and possibly (p)ppGpp with moderate affinity, with high nucleotide exchange rates and a fairly low GTP hydrolysis rate. Plays a role in control of the cell cycle, stress response, ribosome biogenesis and in those bacteria that undergo differentiation, in morphogenesis control. This is GTPase Obg from Prochlorococcus marinus (strain AS9601).